Here is a 692-residue protein sequence, read N- to C-terminus: Proprotein convertase subtilisin/kexin type 9 (692 aa).

The signal sequence occupies residues 1–30 (MGTVSSRRSWWPLPLPLLLLLLLGPAGARA). Residues 31–152 (QEDEDGDYEE…IEEDSSVFAQ (122 aa)) constitute a propeptide that is removed on maturation. Tyr-38 carries the sulfotyrosine modification. Ser-47 bears the Phosphoserine mark. The Inhibitor I9 domain occupies 77–149 (TYVVVLKEET…VDYIEEDSSV (73 aa)). Residues 155-444 (PWNLERITPA…VLTPNLVAAL (290 aa)) form the Peptidase S8 domain. Active-site charge relay system residues include Asp-186 and His-226. Intrachain disulfides connect Cys-223–Cys-255 and Cys-323–Cys-358. Ser-386 (charge relay system) is an active-site residue. Residues 450 to 692 (RAGWQLFCRT…HLVQASQELQ (243 aa)) form a C-terminal domain region. 3 disulfide bridges follow: Cys-457/Cys-527, Cys-477/Cys-526, and Cys-486/Cys-509. Asn-533 carries N-linked (GlcNAc...) asparagine glycosylation. 6 disulfide bridges follow: Cys-534–Cys-601, Cys-552–Cys-600, Cys-562–Cys-588, Cys-608–Cys-679, Cys-626–Cys-678, and Cys-635–Cys-654. Ser-688 is subject to Phosphoserine.

It belongs to the peptidase S8 family. In terms of assembly, monomer. Can self-associate to form dimers and higher multimers which may have increased LDLR degrading activity. The precursor protein but not the mature protein may form multimers. Interacts with APOB, VLDLR, LRP8/APOER2 and BACE1. The full-length immature form (pro-PCSK9) interacts with SCNN1A, SCNN1B and SCNN1G. The pro-PCSK9 form (via C-terminal domain) interacts with LDLR. Interacts (via the C-terminal domain) with ANXA2 (via repeat Annexin 1); the interaction inhibits the degradation of LDLR. Requires Ca(2+) as cofactor. Cleavage by furin and PCSK5 generates a truncated inactive protein that is unable to induce LDLR degradation. In terms of processing, undergoes autocatalytic cleavage in the endoplasmic reticulum to release the propeptide from the N-terminus and the cleavage of the propeptide is strictly required for its maturation and activation. The cleaved propeptide however remains associated with the catalytic domain through non-covalent interactions, preventing potential substrates from accessing its active site. As a result, it is secreted from cells as a propeptide-containing, enzymatically inactive protein. Post-translationally, phosphorylation protects the propeptide against proteolysis.

The protein localises to the cytoplasm. Its subcellular location is the secreted. It is found in the endosome. It localises to the lysosome. The protein resides in the cell surface. The protein localises to the endoplasmic reticulum. Its subcellular location is the golgi apparatus. Its proteolytic activity is autoinhibited by the non-covalent binding of the propeptide to the catalytic domain. Inhibited by EGTA. In terms of biological role, crucial player in the regulation of plasma cholesterol homeostasis. Binds to low-density lipid receptor family members: low density lipoprotein receptor (LDLR), very low density lipoprotein receptor (VLDLR), apolipoprotein E receptor (LRP1/APOER) and apolipoprotein receptor 2 (LRP8/APOER2), and promotes their degradation in intracellular acidic compartments. Acts via a non-proteolytic mechanism to enhance the degradation of the hepatic LDLR through a clathrin LDLRAP1/ARH-mediated pathway. May prevent the recycling of LDLR from endosomes to the cell surface or direct it to lysosomes for degradation. Can induce ubiquitination of LDLR leading to its subsequent degradation. Inhibits intracellular degradation of APOB via the autophagosome/lysosome pathway in a LDLR-independent manner. Involved in the disposal of non-acetylated intermediates of BACE1 in the early secretory pathway. Inhibits epithelial Na(+) channel (ENaC)-mediated Na(+) absorption by reducing ENaC surface expression primarily by increasing its proteasomal degradation. Regulates neuronal apoptosis via modulation of LRP8/APOER2 levels and related anti-apoptotic signaling pathways. This is Proprotein convertase subtilisin/kexin type 9 (PCSK9) from Macaca nemestrina (Pig-tailed macaque).